Reading from the N-terminus, the 163-residue chain is ATP synthase subunit b (163 aa).

A helical membrane pass occupies residues Val-10–Tyr-29.

Belongs to the ATPase B chain family. F-type ATPases have 2 components, F(1) - the catalytic core - and F(0) - the membrane proton channel. F(1) has five subunits: alpha(3), beta(3), gamma(1), delta(1), epsilon(1). F(0) has three main subunits: a(1), b(2) and c(10-14). The alpha and beta chains form an alternating ring which encloses part of the gamma chain. F(1) is attached to F(0) by a central stalk formed by the gamma and epsilon chains, while a peripheral stalk is formed by the delta and b chains.

It localises to the cell membrane. In terms of biological role, f(1)F(0) ATP synthase produces ATP from ADP in the presence of a proton or sodium gradient. F-type ATPases consist of two structural domains, F(1) containing the extramembraneous catalytic core and F(0) containing the membrane proton channel, linked together by a central stalk and a peripheral stalk. During catalysis, ATP synthesis in the catalytic domain of F(1) is coupled via a rotary mechanism of the central stalk subunits to proton translocation. Its function is as follows. Component of the F(0) channel, it forms part of the peripheral stalk, linking F(1) to F(0). The chain is ATP synthase subunit b from Desulforudis audaxviator (strain MP104C).